The primary structure comprises 284 residues: ATP phosphoribosyltransferase (284 aa).

This sequence belongs to the ATP phosphoribosyltransferase family. Long subfamily. As to quaternary structure, equilibrium between an active dimeric form, an inactive hexameric form and higher aggregates. Interconversion between the various forms is largely reversible and is influenced by the natural substrates and inhibitors of the enzyme. Mg(2+) is required as a cofactor.

It localises to the cytoplasm. It carries out the reaction 1-(5-phospho-beta-D-ribosyl)-ATP + diphosphate = 5-phospho-alpha-D-ribose 1-diphosphate + ATP. It participates in amino-acid biosynthesis; L-histidine biosynthesis; L-histidine from 5-phospho-alpha-D-ribose 1-diphosphate: step 1/9. Its activity is regulated as follows. Feedback inhibited by histidine. Its function is as follows. Catalyzes the condensation of ATP and 5-phosphoribose 1-diphosphate to form N'-(5'-phosphoribosyl)-ATP (PR-ATP). Has a crucial role in the pathway because the rate of histidine biosynthesis seems to be controlled primarily by regulation of HisG enzymatic activity. In Mycobacterium avium (strain 104), this protein is ATP phosphoribosyltransferase.